Here is a 382-residue protein sequence, read N- to C-terminus: Alanine racemase 1 (382 aa).

The active-site Proton acceptor; specific for D-alanine is Lys-39. Lys-39 is modified (N6-(pyridoxal phosphate)lysine). Arg-138 is a binding site for substrate. The active-site Proton acceptor; specific for L-alanine is Tyr-265. Met-312 contributes to the substrate binding site.

Belongs to the alanine racemase family. The cofactor is pyridoxal 5'-phosphate.

The enzyme catalyses L-alanine = D-alanine. It participates in amino-acid biosynthesis; D-alanine biosynthesis; D-alanine from L-alanine: step 1/1. Its function is as follows. Catalyzes the interconversion of L-alanine and D-alanine. May also act on other amino acids. The chain is Alanine racemase 1 (alr1) from Staphylococcus aureus (strain NCTC 8325 / PS 47).